We begin with the raw amino-acid sequence, 317 residues long: Flagellar hook-associated protein 3 (317 aa).

This sequence belongs to the bacterial flagellin family.

The protein localises to the secreted. It localises to the bacterial flagellum. This is Flagellar hook-associated protein 3 (flgL) from Salmonella typhimurium (strain LT2 / SGSC1412 / ATCC 700720).